A 125-amino-acid chain; its full sequence is MTGRHVSRVRSLYRRILQLHRALPPDLKALGDQYVKDEFRRHKTVGPGEAQRFLKEWETYAAVLWQQAKDSRQSSSGKACFGTSLPEEKLNDFRDEQIGQLQELMQEATKPNRQFSITESTKPHL.

The N-terminal 30 residues, 1–30, are a transit peptide targeting the mitochondrion; that stretch reads MTGRHVSRVRSLYRRILQLHRALPPDLKAL.

It belongs to the complex I LYR family. SDHAF3 subfamily. Interacts with Sdhb within an Sdha-Sdhb subcomplex.

Its subcellular location is the mitochondrion matrix. Functionally, plays an essential role in the assembly of succinate dehydrogenase (SDH), an enzyme complex (also referred to as respiratory complex II) that is a component of both the tricarboxylic acid (TCA) cycle and the mitochondrial electron transport chain, and which couples the oxidation of succinate to fumarate with the reduction of ubiquinone (coenzyme Q) to ubiquinol. Promotes maturation of the iron-sulfur protein subunit Sdhb of the SDH catalytic dimer, protecting it from the deleterious effects of oxidants. May act together with SDHAF1. The sequence is that of Succinate dehydrogenase assembly factor 3, mitochondrial from Rattus norvegicus (Rat).